Reading from the N-terminus, the 86-residue chain is Cell division topological specificity factor (86 aa).

It belongs to the MinE family.

Prevents the cell division inhibition by proteins MinC and MinD at internal division sites while permitting inhibition at polar sites. This ensures cell division at the proper site by restricting the formation of a division septum at the midpoint of the long axis of the cell. The sequence is that of Cell division topological specificity factor from Rhizobium etli (strain ATCC 51251 / DSM 11541 / JCM 21823 / NBRC 15573 / CFN 42).